The primary structure comprises 61 residues: uncharacterized protein (61 aa).

Residues 1-20 (MSSTTSTINLSSLGSAINDV) are Extracellular-facing. The chain crosses the membrane as a helical span at residues 21–41 (LNIIVQYLPVFVTVAVLFGII). Topologically, residues 42–61 (TYMTGGLGGLFSGITGIFGS) are cytoplasmic.

Its subcellular location is the host membrane. This is an uncharacterized protein from Acidianus filamentous virus 2 (isolate Italy/Pozzuoli) (AFV-2).